The primary structure comprises 320 residues: Cytochrome f (320 aa).

The N-terminal stretch at M1–A35 is a signal peptide. Heme is bound by residues Y36, C56, C59, and H60. The chain crosses the membrane as a helical span at residues V286 to K306.

Belongs to the cytochrome f family. As to quaternary structure, the 4 large subunits of the cytochrome b6-f complex are cytochrome b6, subunit IV (17 kDa polypeptide, petD), cytochrome f and the Rieske protein, while the 4 small subunits are PetG, PetL, PetM and PetN. The complex functions as a dimer. Requires heme as cofactor.

The protein resides in the plastid. It localises to the chloroplast thylakoid membrane. In terms of biological role, component of the cytochrome b6-f complex, which mediates electron transfer between photosystem II (PSII) and photosystem I (PSI), cyclic electron flow around PSI, and state transitions. This chain is Cytochrome f, found in Ceratophyllum demersum (Rigid hornwort).